A 440-amino-acid polypeptide reads, in one-letter code: DNA dC-&gt;dU-editing enzyme APOBEC-3 (440 aa).

CMP/dCMP-type deaminase domains lie at 49-165 (GRKD…AQVA) and 249-368 (EEEF…LCSL). Histidine 82 contacts Zn(2+). Glutamate 84 functions as the Proton donor in the catalytic mechanism. Residues cysteine 116, cysteine 119, histidine 299, cysteine 327, and cysteine 330 each coordinate Zn(2+).

Belongs to the cytidine and deoxycytidylate deaminase family. In terms of assembly, homodimer. Interacts with mouse mammary tumor virus (MMTV) nucleocapsid protein p14. Zn(2+) serves as cofactor. In terms of tissue distribution, expressed in spleen, node and lung.

It is found in the cytoplasm. It carries out the reaction a 2'-deoxycytidine in single-stranded DNA + H2O + H(+) = a 2'-deoxyuridine in single-stranded DNA + NH4(+). Its function is as follows. DNA deaminase (cytidine deaminase) which acts as an inhibitor of retrovirus replication and retrotransposon mobility via deaminase-dependent and -independent mechanisms. Selectively targets single-stranded DNA and does not deaminate double-stranded DNA or single- or double-stranded RNA. Exhibits antiviral activity against HIV-1, simian immunodeficiency viruses (SIVs), mouse mammary tumor virus (MMTV) and friend murine leukemia virus (FrMLV) and may inhibit the mobility of LTR retrotransposons. This is DNA dC-&gt;dU-editing enzyme APOBEC-3 (Apobec3) from Mus musculus (Mouse).